A 398-amino-acid chain; its full sequence is DNA replication and repair protein RecF (398 aa).

An ATP-binding site is contributed by 30 to 37; sequence GRNGFGKT.

The protein belongs to the RecF family.

It is found in the cytoplasm. Its function is as follows. The RecF protein is involved in DNA metabolism; it is required for DNA replication and normal SOS inducibility. RecF binds preferentially to single-stranded, linear DNA. It also seems to bind ATP. The polypeptide is DNA replication and repair protein RecF (Corynebacterium efficiens (strain DSM 44549 / YS-314 / AJ 12310 / JCM 11189 / NBRC 100395)).